Here is a 297-residue protein sequence, read N- to C-terminus: Urease accessory protein UreD (297 aa).

Residues Met-1 to Ser-18 are compositionally biased toward low complexity. Disordered regions lie at residues Met-1–Thr-20 and Val-178–Arg-201.

Belongs to the UreD family. In terms of assembly, ureD, UreF and UreG form a complex that acts as a GTP-hydrolysis-dependent molecular chaperone, activating the urease apoprotein by helping to assemble the nickel containing metallocenter of UreC. The UreE protein probably delivers the nickel.

It is found in the cytoplasm. Required for maturation of urease via the functional incorporation of the urease nickel metallocenter. In Parafrankia sp. (strain EAN1pec), this protein is Urease accessory protein UreD.